The primary structure comprises 119 residues: Large ribosomal subunit protein uL18 (119 aa).

A disordered region spans residues 1-20; it reads MSQIDKASRRQKIKDRSRVK. Residues 9–20 show a composition bias toward basic residues; that stretch reads RRQKIKDRSRVK.

This sequence belongs to the universal ribosomal protein uL18 family. Part of the 50S ribosomal subunit; part of the 5S rRNA/L5/L18/L25 subcomplex. Contacts the 5S and 23S rRNAs.

Functionally, this is one of the proteins that bind and probably mediate the attachment of the 5S RNA into the large ribosomal subunit, where it forms part of the central protuberance. The chain is Large ribosomal subunit protein uL18 from Chlorobium phaeobacteroides (strain DSM 266 / SMG 266 / 2430).